Here is a 97-residue protein sequence, read N- to C-terminus: MAEPLKSVDYEVFGTVQGVCFRMYTEGEAKKRGLVGWVKNTSKGTVTGQVQGPEEKVNSMKSWLSKVGSPSSRIDRADFSNEKTISKLEYSNFSIRY.

Position 2 is an N-acetylalanine (A2). The region spanning S7–Y97 is the Acylphosphatase-like domain. Catalysis depends on residues R22 and N40. At S91 the chain carries Phosphoserine.

The protein belongs to the acylphosphatase family.

It catalyses the reaction an acyl phosphate + H2O = a carboxylate + phosphate + H(+). Its function is as follows. Its physiological role is not yet clear. This is Acylphosphatase-2 (Acyp2) from Rattus norvegicus (Rat).